Reading from the N-terminus, the 66-residue chain is GRDGYVVKNGTNCKYSCEIGSEYEYCGPLCKRKNAKTGYCYAFACWCIDVPDDVKLYGDDGTYCSS.

The region spanning 2-65 (RDGYVVKNGT…LYGDDGTYCS (64 aa)) is the LCN-type CS-alpha/beta domain. An N-linked (GlcNAc...) asparagine glycan is attached at Asn-9. Disulfide bonds link Cys-13/Cys-64, Cys-17/Cys-40, Cys-26/Cys-45, and Cys-30/Cys-47.

It belongs to the long (4 C-C) scorpion toxin superfamily. Sodium channel inhibitor family. Beta subfamily. In terms of processing, N-glycans are core-fucosylated, heterogeneous and short which could be the result of extensive trimming. As to expression, expressed by the venom gland.

The protein localises to the secreted. Functionally, beta toxins bind voltage-independently at site-4 of sodium channels and shift the voltage of activation toward more negative potentials thereby affecting sodium channel activation and promoting spontaneous and repetitive firing. This toxin is active only on insects. This toxin has very low anti-insect activity. This is Toxin Aah6 from Androctonus australis (Sahara scorpion).